Consider the following 262-residue polypeptide: Mlc titration factor A (262 aa).

Zn(2+)-binding residues include histidine 111, histidine 148, histidine 152, and glutamate 211.

The protein belongs to the MtfA family. As to quaternary structure, interacts with Mlc. Requires Zn(2+) as cofactor.

It is found in the cytoplasm. Functionally, involved in the modulation of the activity of the glucose-phosphotransferase system (glucose-PTS). Interacts with the transcriptional repressor Mlc, preventing its interaction with DNA and leading to the modulation of expression of genes regulated by Mlc, including ptsG, which encodes the PTS system glucose-specific EIICB component. Its function is as follows. Shows zinc-dependent metallopeptidase activity. The polypeptide is Mlc titration factor A (Serratia proteamaculans (strain 568)).